Consider the following 889-residue polypeptide: Phosphofurin acidic cluster sorting protein 2 (889 aa).

Disordered stretches follow at residues 180–246, 293–463, and 687–740; these read DHED…TSMT, LDME…PDAR, and SSAT…SQGV. Over residues 343–358 the composition is skewed to basic and acidic residues; it reads SHKEPPSPADVPEKTR. Ser-390, Ser-416, Ser-453, Ser-691, and Ser-694 each carry phosphoserine. 2 stretches are compositionally biased toward low complexity: residues 687-720 and 727-737; these read SSAT…KEAS and PSVSGGLSSPS.

Belongs to the PACS family. As to quaternary structure, interacts with BID and PKD2. Interacts with SIRT1. Interacts with HDAC1. Interacts with TRPV1. Interacts with WDR37. In terms of assembly, (Microbial infection) Interacts with HIV-1 Nef. In terms of tissue distribution, broadly expressed, with greatest levels in skeletal muscle followed by heart, brain, pancreas and testis.

It localises to the endoplasmic reticulum. It is found in the mitochondrion. Its function is as follows. Multifunctional sorting protein that controls the endoplasmic reticulum (ER)-mitochondria communication, including the apposition of mitochondria with the ER and ER homeostasis. In addition, in response to apoptotic inducer, translocates BIB to mitochondria, which initiates a sequence of events including the formation of mitochondrial truncated BID, the release of cytochrome c, the activation of caspase-3 thereby causing cell death. May also be involved in ion channel trafficking, directing acidic cluster-containing ion channels to distinct subcellular compartments. This is Phosphofurin acidic cluster sorting protein 2 from Homo sapiens (Human).